The primary structure comprises 327 residues: Ornithine carbamoyltransferase (327 aa).

Carbamoyl phosphate is bound by residues 56–59 (STRT), Gln-83, Arg-107, and 134–137 (HPTQ). Residues Asn-166, Asp-230, and 234 to 235 (SM) contribute to the L-ornithine site. Residues 269–270 (CL) and Arg-314 contribute to the carbamoyl phosphate site.

The protein belongs to the aspartate/ornithine carbamoyltransferase superfamily. OTCase family.

It is found in the cytoplasm. It catalyses the reaction carbamoyl phosphate + L-ornithine = L-citrulline + phosphate + H(+). The protein operates within amino-acid degradation; L-arginine degradation via ADI pathway; carbamoyl phosphate from L-arginine: step 2/2. Functionally, reversibly catalyzes the transfer of the carbamoyl group from carbamoyl phosphate (CP) to the N(epsilon) atom of ornithine (ORN) to produce L-citrulline. In Borreliella burgdorferi (strain ZS7) (Borrelia burgdorferi), this protein is Ornithine carbamoyltransferase.